The primary structure comprises 1194 residues: DNA polymerase catalytic subunit (1194 aa).

It belongs to the DNA polymerase type-B family. Forms a complex with the ssDNA-binding protein, the DNA polymerase processivity factor, and the alkaline exonuclease. Interacts with the helicase-primase complex composed of the primase, the helicase and the primase-associated factor; this interaction may coordinate leading and lagging strand DNA synthesis at the replication fork.

The protein resides in the host nucleus. The catalysed reaction is DNA(n) + a 2'-deoxyribonucleoside 5'-triphosphate = DNA(n+1) + diphosphate. It carries out the reaction Endonucleolytic cleavage to 5'-phosphomonoester.. Its function is as follows. Replicates viral genomic DNA. The replication complex is composed of six viral proteins: the DNA polymerase, processivity factor, primase, primase-associated factor, helicase, and ssDNA-binding protein. Additionally, the polymerase contains an intrinsic ribonuclease H (RNase H) activity that specifically degrades RNA/DNA heteroduplexes or duplex DNA substrates in the 5' to 3' direction. Therefore, it can catalyze the excision of the RNA primers that initiate the synthesis of Okazaki fragments at a replication fork during viral DNA replication. In Varicella-zoster virus (strain Dumas) (HHV-3), this protein is DNA polymerase catalytic subunit.